The chain runs to 154 residues: Protein-export protein SecB (154 aa).

It belongs to the SecB family. Homotetramer, a dimer of dimers. One homotetramer interacts with 1 SecA dimer.

The protein localises to the cytoplasm. One of the proteins required for the normal export of preproteins out of the cell cytoplasm. It is a molecular chaperone that binds to a subset of precursor proteins, maintaining them in a translocation-competent state. It also specifically binds to its receptor SecA. This is Protein-export protein SecB from Buchnera aphidicola subsp. Schizaphis graminum (strain Sg).